A 406-amino-acid chain; its full sequence is MSAEREAAEAATVAAATEAGAETGTGAGEGAPSQPPTVEVASDPQPPPAPEASASASAPPLRCLVLTGFGGYDKVKLQSRPAVPPAPGPGQLTLRVRACGLNFADLMGRQGLYDRLPPLPVTPGMEGAGVVVAVGEGVGDRKAGDRVMVLNRSGMWQEEVTVPSAQTFLMPEAMTFEEAAALLVNYITAYMVLFDFGNLRPGHSVLVHMAAGGVGMAALQLCRTVENVTVFGTASASKHEVLKENGVTHPIDYHTTDYVDEIKKISPKGVDIVMDPLGGSDTAKGYHLLKPMGKVVTYGMANLLTGPKRNLMAMARTWWNQFSVTALQLLQANRAVCGFHLGYLDGEVELVNSVVTRLVALYNQGHIKPRIDSVWPFEKVADAMKQMQEKKNIGKVLLVPGPEKET.

The interval 1-57 (MSAEREAAEAATVAAATEAGAETGTGAGEGAPSQPPTVEVASDPQPPPAPEASASAS) is disordered. Residue serine 2 is modified to N-acetylserine. The residue at position 2 (serine 2) is a Phosphoserine. Residues 9-22 (EAATVAAATEAGAE) show a composition bias toward low complexity. Phosphoserine occurs at positions 33 and 42.

It belongs to the zinc-containing alcohol dehydrogenase family. Quinone oxidoreductase subfamily.

The protein localises to the cytoplasm. It localises to the mitochondrion outer membrane. In terms of biological role, plays a part in calcium-regulated keratinocyte activation in epidermal repair mechanisms. Has no effect on cell proliferation. Possesses ATPase activity. Negatively regulates mitochondrial fusion in cooperation with mitofusin proteins (MFN1-2). The protein is Synaptic vesicle membrane protein VAT-1 homolog (Vat1) of Mus musculus (Mouse).